Reading from the N-terminus, the 507-residue chain is ATP synthase subunit alpha, chloroplastic (507 aa).

Gly-170–Thr-177 serves as a coordination point for ATP.

The protein belongs to the ATPase alpha/beta chains family. F-type ATPases have 2 components, CF(1) - the catalytic core - and CF(0) - the membrane proton channel. CF(1) has five subunits: alpha(3), beta(3), gamma(1), delta(1), epsilon(1). CF(0) has four main subunits: a, b, b' and c.

The protein resides in the plastid. It is found in the chloroplast thylakoid membrane. The catalysed reaction is ATP + H2O + 4 H(+)(in) = ADP + phosphate + 5 H(+)(out). Its function is as follows. Produces ATP from ADP in the presence of a proton gradient across the membrane. The alpha chain is a regulatory subunit. This chain is ATP synthase subunit alpha, chloroplastic, found in Oryza nivara (Indian wild rice).